Here is a 420-residue protein sequence, read N- to C-terminus: MGSIDDSFSLPAPSDEHGFEALGTQLVEAMSTYAKCLKAENLPPPSLYPMFSASTSVACPEGIEAKRKIVELSQLICAATMDPELNLLISSLQFHFCSSLKVAIDLRIYEYIPVDGTVSLSQLAELAGRIMRVLTNKHVFMQIQPGHYAHTRMSSLLLKTKAKDLLSHRLDDVFRSASREADALAQAGYREPDRRAAKGFNLAFNTDKNFWEYIATDDPKRGARFARAMHAVNINSLDVIPRLYPFDSLATDGSLIVDVGGGQGQVAKRILEYYPNSGLRCIVQDGYVTNGSTAGPAAVEMHRHDFFEAQPIKGAAAYFFRHIFHDWPDNACVTILKQTARAMDKHRSRILICDQVLDDNSPAEASLLYDIDMMSLFGGKERSLAEWKSLIYSAGENLEIVNVLRSPESEAAILDVRLKL.

Asp285 is an S-adenosyl-L-methionine binding site. His325 serves as the catalytic Proton acceptor.

The protein belongs to the class I-like SAM-binding methyltransferase superfamily. Cation-independent O-methyltransferase family.

It participates in secondary metabolite biosynthesis. Its pathway is alkaloid biosynthesis. The protein operates within mycotoxin biosynthesis. Its function is as follows. O-methyltransferase; part of the gene cluster that mediates the biosynthesis of penigequinolones, potent insecticidal alkaloids that contain a highly modified 10-carbon prenyl group. The first stage is catalyzed by the nonribosomal peptide synthetase penN that condenses anthranilic acid and O-methyl-L-tyrosine to produce 4'-methoxycyclopeptin. 4'-methoxycyclopeptin is then converted to 4'-methoxydehydrocyclopeptin by the ketoglutarate-dependent dioxygenase penM through dehydrogenation to form a double bond between C-alpha and C-beta of the O-methyltyrosine side chain. PenM also converts its first product methoxydehydrocyclopeptin to 4'-methoxycyclopenin. The following conversion of 4'methoxycyclopenin into 4'-methoxyviridicatin is catalyzed by the cyclopenase penL. 4'-methoxyviridicatin is the precursor of quinolone natural products, and is further converted to quinolinone B. The prenyltransferase penI then catalyzes the canonical Friedel-Crafts alkylation of quinolinone B with dimethylallyl cation to yield dimethylallyl quinolone, which is subjected to FAD-dependent dehydrogenation by the FAD-linked oxidoreductase penH to yield conjugated aryl diene. The delta(3') double bond then serves as the site of the second alkylation with DMAPP catalyzed by the prenyltransferase penG to yield a carbenium ion intermediate, which can be attacked by H(2)O to yield a styrenyl quinolone containing a C3'-hydroxyprenyl chain, or undergo cyclization to yield yaequinolones J1 and J2. The conversion of the styrenyl quinolone into the tetrahydrofuran-containing yaequinolone C is performed by the FAD-dependent monooxygenase penE and involves epoxidation of the terminal C7'-C8' olefin, followed by epoxide ring opening initiated by the C3' hydroxyl group. The predicted cysteine hydrolase penJ acts as an epoxide hydrolase that enhances the rate of the 5-exo-tet cyclization step, increasing the yield of yaequinolone C. PenF catalyzes the cationic rearrangement of the epoxide formed by penE (before ring opening to produce yaequinolone C) into yaequinolone D. Finally, the short-chain dehydrogenase/reductase (SDR)-like reductase penD, catalyzes both the dehydration of yaequinolone D and the reduction of the resulting oxonium to yield penigequinolone. This is O-methyltransferase penK from Penicillium thymicola.